The primary structure comprises 284 residues: RAD52 motif-containing protein 1 (284 aa).

The interval 1–92 is necessary for nuclear localization and for nucleolar accumulation in response to heat shock; the sequence is MAELVPFAVP…KQLFQKSPVK (92 aa). In terms of domain architecture, RRM spans 15–98; the sequence is KTLLVWELSS…SPVKVRLGTR (84 aa). Positions 90–133 are necessary for nuclear and nucleolar localization; it reads PVKVRLGTRHKAVQHQALALNSSRCQELANYYFGFNGWSKRIIK.

Homodimer.

It localises to the nucleus. Its subcellular location is the cytoplasm. The protein resides in the nucleolus. The protein localises to the cajal body. It is found in the PML body. Its function is as follows. May confer resistance to the antitumor agent cisplatin. Binds to DNA and RNA. In Macaca fascicularis (Crab-eating macaque), this protein is RAD52 motif-containing protein 1 (RDM1).